Reading from the N-terminus, the 488-residue chain is Ergochrome gene cluster transcriptional regulator CPUR_05433 (488 aa).

Positions 1–29 (MDHSIGGRNCQSGGTTASAPRSTGSDEFP) are disordered. The segment covering 9 to 25 (NCQSGGTTASAPRSTGS) has biased composition (polar residues). Positions 36–63 (CHACSLSKVRCSKEKPSCSRCAKRGVPC) form a DNA-binding region, zn(2)-C6 fungal-type.

Its subcellular location is the nucleus. In terms of biological role, transcription factor; part of the gene cluster responsible for the typical purple-black color of the ergot sclerotia. The ergochrome gene cluster produces several ergot pigments including the yellow ergochrome secalonic acid and its derivatives, as well as the red anthraquinones endocrocin and clavorubin. This Claviceps purpurea (strain 20.1) (Ergot fungus) protein is Ergochrome gene cluster transcriptional regulator CPUR_05433.